The sequence spans 174 residues: Eukaryotic translation elongation factor 1 epsilon-1 (174 aa).

Ala2 bears the N-acetylalanine mark. The interval 2 to 56 is N-terminal; sequence AAAAELKLLEKSLGLRPGNKYSAQGERQIPVLQTNNGPSLTGLATIATHLVKQAS. One can recognise a GST C-terminal domain in the interval 50–173; the sequence is HLVKQASKEH…FIKNRLYANS (124 aa). The interval 57-63 is linker; it reads KEHLLGS. Positions 64-152 are C-terminal; the sequence is TAEEKALVQQ…SRWFCHIQHY (89 aa). The residue at position 138 (Lys138) is an N6-acetyllysine. Positions 153–169 form a coiled coil; it reads PDIRQHLSSVVFIKNRL.

In terms of assembly, part of a multisubunit complex that groups tRNA ligases for Arg (RARS1), Asp (DARS1), Gln (QARS1), Ile (IARS1), Leu (LARS1), Lys (KARS1), Met (MARS1) the bifunctional ligase for Glu and Pro (EPRS1) and the auxiliary subunits AIMP1/p43, AIMP2/p38 and EEF1E1/p18. Can interact simultaneously with MARS1 and EPRS1. Forms a linear complex that contains MARS1, EEF1E1, EPRS1 and AIMP2 that is at the core of the multisubunit complex. Interacts with ATM and ATR. The interaction with ATM, which takes place independently of TP53, is induced by DNA damage that may occur during genotoxic stress or cell growth. The interaction with ATR is enhanced by UV irradiation.

It localises to the cytoplasm. The protein localises to the nucleus. Functionally, positive modulator of ATM response to DNA damage. The sequence is that of Eukaryotic translation elongation factor 1 epsilon-1 (EEF1E1) from Cricetulus griseus (Chinese hamster).